A 609-amino-acid chain; its full sequence is Glutamine--fructose-6-phosphate aminotransferase [isomerizing] (609 aa).

The active-site Nucleophile; for GATase activity is Cys2. In terms of domain architecture, Glutamine amidotransferase type-2 spans 2-218 (CGIVGAVAQR…EGDVAEVTRR (217 aa)). SIS domains are found at residues 286 to 426 (AAEF…HNGM) and 458 to 599 (LAED…VDQP). The active-site For Fru-6P isomerization activity is the Lys604.

In terms of assembly, homodimer.

The protein localises to the cytoplasm. The catalysed reaction is D-fructose 6-phosphate + L-glutamine = D-glucosamine 6-phosphate + L-glutamate. In terms of biological role, catalyzes the first step in hexosamine metabolism, converting fructose-6P into glucosamine-6P using glutamine as a nitrogen source. In Shewanella oneidensis (strain ATCC 700550 / JCM 31522 / CIP 106686 / LMG 19005 / NCIMB 14063 / MR-1), this protein is Glutamine--fructose-6-phosphate aminotransferase [isomerizing].